A 637-amino-acid polypeptide reads, in one-letter code: Glutamate--cysteine ligase catalytic subunit (637 aa).

An N-acetylmethionine modification is found at Met1. 2 positions are modified to phosphoserine: Ser5 and Ser8.

Belongs to the glutamate--cysteine ligase type 3 family. As to quaternary structure, heterodimer of a catalytic heavy chain and a regulatory light chain.

It carries out the reaction L-cysteine + L-glutamate + ATP = gamma-L-glutamyl-L-cysteine + ADP + phosphate + H(+). The catalysed reaction is (2S)-2-aminobutanoate + L-glutamate + ATP = gamma-L-glutamyl-(2S)-2-aminobutanoate + ADP + phosphate + H(+). It participates in sulfur metabolism; glutathione biosynthesis; glutathione from L-cysteine and L-glutamate: step 1/2. Feedback inhibition by glutathione. Functionally, catalyzes the ATP-dependent ligation of L-glutamate and L-cysteine and participates in the first and rate-limiting step in glutathione biosynthesis. The sequence is that of Glutamate--cysteine ligase catalytic subunit from Mus musculus (Mouse).